Reading from the N-terminus, the 892-residue chain is Alanine--tRNA ligase (892 aa).

Residues H593, H597, C694, and H698 each contribute to the Zn(2+) site.

It belongs to the class-II aminoacyl-tRNA synthetase family. Zn(2+) serves as cofactor.

It localises to the cytoplasm. It carries out the reaction tRNA(Ala) + L-alanine + ATP = L-alanyl-tRNA(Ala) + AMP + diphosphate. Its function is as follows. Catalyzes the attachment of alanine to tRNA(Ala) in a two-step reaction: alanine is first activated by ATP to form Ala-AMP and then transferred to the acceptor end of tRNA(Ala). Also edits incorrectly charged Ser-tRNA(Ala) and Gly-tRNA(Ala) via its editing domain. The chain is Alanine--tRNA ligase from Helicobacter hepaticus (strain ATCC 51449 / 3B1).